A 214-amino-acid chain; its full sequence is Mexicain (214 aa).

Disulfide bonds link C22-C63, C56-C95, and C153-C200. C25 is a catalytic residue. Residue C25 coordinates E64. Residues H159 and N175 contribute to the active site.

This sequence belongs to the peptidase C1 family. In terms of tissue distribution, expressed in latex.

It is found in the secreted. In terms of biological role, cysteine protease. This is Mexicain from Jacaratia mexicana (Wild papaya).